Reading from the N-terminus, the 227-residue chain is Cytidylate kinase (227 aa).

Residue 12–20 (GPSGAGKGT) participates in ATP binding.

The protein belongs to the cytidylate kinase family. Type 1 subfamily.

It is found in the cytoplasm. The enzyme catalyses CMP + ATP = CDP + ADP. It catalyses the reaction dCMP + ATP = dCDP + ADP. This is Cytidylate kinase from Citrobacter koseri (strain ATCC BAA-895 / CDC 4225-83 / SGSC4696).